A 537-amino-acid chain; its full sequence is Ribonuclease Y (537 aa).

A helical transmembrane segment spans residues 4–24 (FPIIMSVFAAIIGLVIGYVSV). The segment at 112 to 148 (ASTLDRKDDNLSNKEKALEQKEQSLSDKSKHIDAREE) is disordered. Positions 227–287 (TNSTVHLPDD…IRREIARMTM (61 aa)) constitute a KH domain. One can recognise an HD domain in the interval 353 to 446 (VLRHSIEVAK…VAAADALSAA (94 aa)).

It belongs to the RNase Y family.

It is found in the cell membrane. Its function is as follows. Endoribonuclease that initiates mRNA decay. This Streptococcus sanguinis (strain SK36) protein is Ribonuclease Y.